The primary structure comprises 240 residues: Phosphoribosylaminoimidazole-succinocarboxamide synthase (240 aa).

This sequence belongs to the SAICAR synthetase family.

It carries out the reaction 5-amino-1-(5-phospho-D-ribosyl)imidazole-4-carboxylate + L-aspartate + ATP = (2S)-2-[5-amino-1-(5-phospho-beta-D-ribosyl)imidazole-4-carboxamido]succinate + ADP + phosphate + 2 H(+). It functions in the pathway purine metabolism; IMP biosynthesis via de novo pathway; 5-amino-1-(5-phospho-D-ribosyl)imidazole-4-carboxamide from 5-amino-1-(5-phospho-D-ribosyl)imidazole-4-carboxylate: step 1/2. In Coxiella burnetii (strain RSA 493 / Nine Mile phase I), this protein is Phosphoribosylaminoimidazole-succinocarboxamide synthase.